The chain runs to 383 residues: uncharacterized protein (383 aa).

A run of 10 helical transmembrane segments spans residues 25 to 45, 53 to 73, 103 to 123, 139 to 159, 166 to 186, 200 to 220, 238 to 258, 272 to 292, 309 to 329, and 332 to 352; these read LWVALCIVIGIALGKLLPAVA, IYNVSIPIAICLFFMMYPIMV, FTMVIFAQFFLGYLFAPLLTA, IAGCILLGIAPCTAMVLMWGY, GLTLVMVAVNSLAMLFLYAPL, WQTIVLSVLIYVGLPLAAGIY, FLHYLSPIAIVALLLTLILLF, IFLIAVPLFIQTNFIFLITYV, LIGASNHFEVAIATAVMLFGL, and GAALATVVGVLIEVPVMLMLV.

This sequence belongs to the arsenical resistance-3 (ACR3) (TC 2.A.59) family.

It is found in the cell membrane. This is an uncharacterized protein from Synechocystis sp. (strain ATCC 27184 / PCC 6803 / Kazusa).